The following is a 424-amino-acid chain: Hemagglutinin-esterase (424 aa).

The first 16 residues, 1–16 (MFLLPRFVLVSCIIGS), serve as a signal peptide directing secretion. The esterase domain 1 stretch occupies residues 7-127 (FVLVSCIIGS…SNDIWMQNKG (121 aa)). Residues 17-392 (LGFDNPPTNV…PICVYDPLPI (376 aa)) lie on the Virion surface side of the membrane. The active-site Nucleophile is serine 40. Cysteine 44 and cysteine 65 are joined by a disulfide. N-linked (GlcNAc...) asparagine; by host glycans are attached at residues asparagine 54, asparagine 89, asparagine 153, asparagine 236, and asparagine 301. 3 disulfide bridges follow: cysteine 113–cysteine 162, cysteine 197–cysteine 276, and cysteine 205–cysteine 249. The receptor binding stretch occupies residues 128–266 (LFYTQVYKNM…GNYLAISNEL (139 aa)). Residues 267 to 379 (LLTVPTKAIC…RCPTAADINT (113 aa)) form an esterase domain 2 region. Cysteine 307 and cysteine 312 are oxidised to a cystine. Asparagine 316 is a glycosylation site (N-linked (GlcNAc...) asparagine; by host). Catalysis depends on charge relay system residues aspartate 326 and histidine 329. The cysteines at positions 347 and 371 are disulfide-linked. A glycan (N-linked (GlcNAc...) asparagine; by host) is linked at asparagine 358. Residues 393–413 (ILLGILLGVAVIIIVVLLLYF) traverse the membrane as a helical segment. Residues 414-424 (MVDNGTRLHDA) are Intravirion-facing. Asparagine 417 is a glycosylation site (N-linked (GlcNAc...) asparagine; by host).

It belongs to the influenza type C/coronaviruses hemagglutinin-esterase family. Homodimer; disulfide-linked. Forms a complex with the M protein in the pre-Golgi. Associates then with S-M complex to form a ternary complex S-M-HE. Post-translationally, N-glycosylated in the host RER.

It is found in the virion membrane. Its subcellular location is the host cell membrane. The catalysed reaction is N-acetyl-9-O-acetylneuraminate + H2O = N-acetylneuraminate + acetate + H(+). It catalyses the reaction N-acetyl-4-O-acetylneuraminate + H2O = N-acetylneuraminate + acetate + H(+). Structural protein that makes short spikes at the surface of the virus. Contains receptor binding and receptor-destroying activities. Mediates de-O-acetylation of N-acetyl-4-O-acetylneuraminic acid, which is probably the receptor determinant recognized by the virus on the surface of erythrocytes and susceptible cells. This receptor-destroying activity is important for virus release as it probably helps preventing self-aggregation and ensures the efficient spread of the progeny virus from cell to cell. May serve as a secondary viral attachment protein for initiating infection, the spike protein being the major one. May become a target for both the humoral and the cellular branches of the immune system. This is Hemagglutinin-esterase from Bovine coronavirus (strain 98TXSF-110-LUN) (BCoV-LUN).